A 334-amino-acid polypeptide reads, in one-letter code: DNA-directed RNA polymerase subunit alpha (334 aa).

Residues 1–231 (MNMIKIEPYI…KQMSIFGVDL (231 aa)) are alpha N-terminal domain (alpha-NTD). The segment at 247–334 (ELKTLMIKID…NRKLAKLKSN (88 aa)) is alpha C-terminal domain (alpha-CTD).

This sequence belongs to the RNA polymerase alpha chain family. As to quaternary structure, homodimer. The RNAP catalytic core consists of 2 alpha, 1 beta/beta' and 1 omega subunit. When a sigma factor is associated with the core the holoenzyme is formed, which can initiate transcription.

It catalyses the reaction RNA(n) + a ribonucleoside 5'-triphosphate = RNA(n+1) + diphosphate. Its function is as follows. DNA-dependent RNA polymerase catalyzes the transcription of DNA into RNA using the four ribonucleoside triphosphates as substrates. This is DNA-directed RNA polymerase subunit alpha from Helicobacter hepaticus (strain ATCC 51449 / 3B1).